Reading from the N-terminus, the 208-residue chain is Large ribosomal subunit protein uL3 (208 aa).

Positions lysine 122–alanine 148 are disordered.

Belongs to the universal ribosomal protein uL3 family. Part of the 50S ribosomal subunit. Forms a cluster with proteins L14 and L19.

Functionally, one of the primary rRNA binding proteins, it binds directly near the 3'-end of the 23S rRNA, where it nucleates assembly of the 50S subunit. This Streptococcus pyogenes serotype M1 protein is Large ribosomal subunit protein uL3.